We begin with the raw amino-acid sequence, 589 residues long: Aspartate--tRNA ligase 2 (589 aa).

Glu174 is a binding site for L-aspartate. The aspartate stretch occupies residues 198–201 (QITK). Arg220 serves as a coordination point for L-aspartate. ATP-binding positions include 220–222 (RDE) and Gln229. His443 contacts L-aspartate. Glu477 contacts ATP. Arg484 provides a ligand contact to L-aspartate. 529-532 (GLDR) is a binding site for ATP.

This sequence belongs to the class-II aminoacyl-tRNA synthetase family. Type 1 subfamily. Homodimer.

It localises to the cytoplasm. It catalyses the reaction tRNA(Asp) + L-aspartate + ATP = L-aspartyl-tRNA(Asp) + AMP + diphosphate. Catalyzes the attachment of L-aspartate to tRNA(Asp) in a two-step reaction: L-aspartate is first activated by ATP to form Asp-AMP and then transferred to the acceptor end of tRNA(Asp). This chain is Aspartate--tRNA ligase 2, found in Streptococcus mutans serotype c (strain ATCC 700610 / UA159).